The chain runs to 373 residues: tRNA-specific 2-thiouridylase MnmA (373 aa).

Residues glycine 12–serine 19 and methionine 38 contribute to the ATP site. The interaction with target base in tRNA stretch occupies residues asparagine 98–aspartate 100. The active-site Nucleophile is the cysteine 103. Cysteines 103 and 200 form a disulfide. Residue glycine 127 coordinates ATP. The interval lysine 150–glutamine 152 is interaction with tRNA. The active-site Cysteine persulfide intermediate is the cysteine 200. The tract at residues arginine 312–tyrosine 313 is interaction with tRNA.

It belongs to the MnmA/TRMU family.

The protein resides in the cytoplasm. The enzyme catalyses S-sulfanyl-L-cysteinyl-[protein] + uridine(34) in tRNA + AH2 + ATP = 2-thiouridine(34) in tRNA + L-cysteinyl-[protein] + A + AMP + diphosphate + H(+). In terms of biological role, catalyzes the 2-thiolation of uridine at the wobble position (U34) of tRNA, leading to the formation of s(2)U34. The polypeptide is tRNA-specific 2-thiouridylase MnmA (Streptococcus mutans serotype c (strain ATCC 700610 / UA159)).